Here is a 1070-residue protein sequence, read N- to C-terminus: DNA-directed RNA polymerase subunit beta (1070 aa).

The protein belongs to the RNA polymerase beta chain family. In terms of assembly, in plastids the minimal PEP RNA polymerase catalytic core is composed of four subunits: alpha, beta, beta', and beta''. When a (nuclear-encoded) sigma factor is associated with the core the holoenzyme is formed, which can initiate transcription.

The protein localises to the plastid. It localises to the chloroplast. It carries out the reaction RNA(n) + a ribonucleoside 5'-triphosphate = RNA(n+1) + diphosphate. In terms of biological role, DNA-dependent RNA polymerase catalyzes the transcription of DNA into RNA using the four ribonucleoside triphosphates as substrates. The polypeptide is DNA-directed RNA polymerase subunit beta (Solanum lycopersicum (Tomato)).